The chain runs to 117 residues: Ribosome-binding factor A (117 aa).

This sequence belongs to the RbfA family. Monomer. Binds 30S ribosomal subunits, but not 50S ribosomal subunits or 70S ribosomes.

The protein localises to the cytoplasm. Its function is as follows. One of several proteins that assist in the late maturation steps of the functional core of the 30S ribosomal subunit. Associates with free 30S ribosomal subunits (but not with 30S subunits that are part of 70S ribosomes or polysomes). Required for efficient processing of 16S rRNA. May interact with the 5'-terminal helix region of 16S rRNA. The polypeptide is Ribosome-binding factor A (Nitrosomonas eutropha (strain DSM 101675 / C91 / Nm57)).